A 973-amino-acid chain; its full sequence is Translation initiation factor IF-2 (973 aa).

Over residues 97-135 (GHIDLDGGQHKKQQEEPKAKEEPKVKEEPKVKEEPKVKE) the composition is skewed to basic and acidic residues. Disordered stretches follow at residues 97-343 (GHID…EDVQ) and 353-372 (LTNKNNKNNKGAKYRRDKRD). Positions 136 to 155 (APAAPAAQAPVKPAQPAQAP) are enriched in low complexity. 4 stretches are compositionally biased toward basic and acidic residues: residues 156–175 (TEKKEEKVIVVEVEKEKTVE), 183–204 (PKVESVKPEQEVEKTEEKDDNL), 212–224 (LESKIKVTGKIDL), and 237–250 (TKEEKRKERDEKQK). A compositionally biased stretch (low complexity) spans 252–266 (NNNRPGNNSNGPGAP). 2 stretches are compositionally biased toward basic and acidic residues: residues 315–326 (PNRDDRPNNDRK) and 333–343 (VKAEVSEEDVQ). One can recognise a tr-type G domain in the interval 472–642 (ARPPIVTVMG…LLEADLLDLK (171 aa)). Residues 481-488 (GHVDHGKT) form a G1 region. A GTP-binding site is contributed by 481–488 (GHVDHGKT). The G2 stretch occupies residues 506-510 (GITQH). Positions 528-531 (DTPG) are G3. GTP is bound by residues 528-532 (DTPGH) and 582-585 (NKID). The segment at 582 to 585 (NKID) is G4. The G5 stretch occupies residues 618-620 (SAK).

This sequence belongs to the TRAFAC class translation factor GTPase superfamily. Classic translation factor GTPase family. IF-2 subfamily.

The protein resides in the cytoplasm. Its function is as follows. One of the essential components for the initiation of protein synthesis. Protects formylmethionyl-tRNA from spontaneous hydrolysis and promotes its binding to the 30S ribosomal subunits. Also involved in the hydrolysis of GTP during the formation of the 70S ribosomal complex. This Parabacteroides distasonis (strain ATCC 8503 / DSM 20701 / CIP 104284 / JCM 5825 / NCTC 11152) protein is Translation initiation factor IF-2.